Reading from the N-terminus, the 87-residue chain is Acyl-CoA-binding protein (87 aa).

Position 2 is an N-acetylserine (S2). Positions 2 to 87 (SQAEFEKAAE…VEELKKKYGI (86 aa)) constitute an ACB domain. The residue at position 8 (K8) is an N6-acetyllysine; alternate. N6-succinyllysine; alternate is present on K8. Residue K14 coordinates an acyl-CoA. K17 carries the post-translational modification N6-succinyllysine. An N6-acetyllysine modification is found at K19. Y29 carries the phosphotyrosine modification. Residues 29–33 (YSHYK), K51, K55, and Y74 contribute to the an acyl-CoA site. K51 is subject to N6-acetyllysine. K55 carries the N6-acetyllysine; alternate modification. Position 55 is an N6-succinyllysine; alternate (K55). K55 is subject to N6-(2-hydroxyisobutyryl)lysine; alternate. Residue K55 is modified to N6-malonyllysine; alternate. K77 carries the N6-acetyllysine; alternate modification. K77 carries the N6-succinyllysine; alternate modification.

The protein belongs to the ACBP family. As to quaternary structure, monomer.

The protein localises to the endoplasmic reticulum. It is found in the golgi apparatus. Binds medium- and long-chain acyl-CoA esters with very high affinity and may function as an intracellular carrier of acyl-CoA esters. It is also able to displace diazepam from the benzodiazepine (BZD) recognition site located on the GABA type A receptor. It is therefore possible that this protein also acts as a neuropeptide to modulate the action of the GABA receptor. Functionally, DBI(32-86) has antibacterial properties. This chain is Acyl-CoA-binding protein (DBI), found in Sus scrofa (Pig).